A 473-amino-acid polypeptide reads, in one-letter code: Bifunctional protein HldE (473 aa).

Residues 1–317 (MKLSMPRFDQ…RRAVQREQGS (317 aa)) are ribokinase. 194 to 197 (NLSE) is a binding site for ATP. The active site involves D263. A cytidylyltransferase region spans residues 343-473 (FTNGCFDILH…TAIVEKIRQR (131 aa)).

In the N-terminal section; belongs to the carbohydrate kinase PfkB family. This sequence in the C-terminal section; belongs to the cytidylyltransferase family. As to quaternary structure, homodimer.

The enzyme catalyses D-glycero-beta-D-manno-heptose 7-phosphate + ATP = D-glycero-beta-D-manno-heptose 1,7-bisphosphate + ADP + H(+). It catalyses the reaction D-glycero-beta-D-manno-heptose 1-phosphate + ATP + H(+) = ADP-D-glycero-beta-D-manno-heptose + diphosphate. It participates in nucleotide-sugar biosynthesis; ADP-L-glycero-beta-D-manno-heptose biosynthesis; ADP-L-glycero-beta-D-manno-heptose from D-glycero-beta-D-manno-heptose 7-phosphate: step 1/4. It functions in the pathway nucleotide-sugar biosynthesis; ADP-L-glycero-beta-D-manno-heptose biosynthesis; ADP-L-glycero-beta-D-manno-heptose from D-glycero-beta-D-manno-heptose 7-phosphate: step 3/4. Catalyzes the phosphorylation of D-glycero-D-manno-heptose 7-phosphate at the C-1 position to selectively form D-glycero-beta-D-manno-heptose-1,7-bisphosphate. In terms of biological role, catalyzes the ADP transfer from ATP to D-glycero-beta-D-manno-heptose 1-phosphate, yielding ADP-D-glycero-beta-D-manno-heptose. The polypeptide is Bifunctional protein HldE (Pseudomonas aeruginosa (strain LESB58)).